The primary structure comprises 640 residues: Chaperone protein HtpG (640 aa).

An a; substrate-binding region spans residues 1-348 (MAQYKFETEV…SEDLPLNVSR (348 aa)). The tract at residues 349-565 (EILQQNRILS…ETDPSLQMER (217 aa)) is b. Residues 566-640 (MMRAMGQFNT…RLNRLMTNLK (75 aa)) are c.

Belongs to the heat shock protein 90 family. In terms of assembly, homodimer.

It is found in the cytoplasm. Its function is as follows. Molecular chaperone. Has ATPase activity. In Treponema denticola (strain ATCC 35405 / DSM 14222 / CIP 103919 / JCM 8153 / KCTC 15104), this protein is Chaperone protein HtpG.